Consider the following 540-residue polypeptide: Glucose-6-phosphate isomerase (540 aa).

E350 (proton donor) is an active-site residue. Residues H381 and K503 contribute to the active site.

This sequence belongs to the GPI family.

The protein localises to the cytoplasm. It catalyses the reaction alpha-D-glucose 6-phosphate = beta-D-fructose 6-phosphate. It functions in the pathway carbohydrate biosynthesis; gluconeogenesis. It participates in carbohydrate degradation; glycolysis; D-glyceraldehyde 3-phosphate and glycerone phosphate from D-glucose: step 2/4. Its function is as follows. Catalyzes the reversible isomerization of glucose-6-phosphate to fructose-6-phosphate. The chain is Glucose-6-phosphate isomerase from Burkholderia pseudomallei (strain 668).